The sequence spans 45 residues: Photosystem II reaction center protein K (45 aa).

A propeptide spanning residues 1–8 is cleaved from the precursor; that stretch reads MITAIIIA. The chain crosses the membrane as a helical span at residues 23–43; the sequence is ILPVIPIFFLLLAFVWQAAIG.

It belongs to the PsbK family. PSII is composed of 1 copy each of membrane proteins PsbA, PsbB, PsbC, PsbD, PsbE, PsbF, PsbH, PsbI, PsbJ, PsbK, PsbL, PsbM, PsbT, PsbX, PsbY, PsbZ, Psb30/Ycf12, at least 3 peripheral proteins of the oxygen-evolving complex and a large number of cofactors. It forms dimeric complexes.

It is found in the plastid. The protein resides in the chloroplast thylakoid membrane. One of the components of the core complex of photosystem II (PSII). PSII is a light-driven water:plastoquinone oxidoreductase that uses light energy to abstract electrons from H(2)O, generating O(2) and a proton gradient subsequently used for ATP formation. It consists of a core antenna complex that captures photons, and an electron transfer chain that converts photonic excitation into a charge separation. The protein is Photosystem II reaction center protein K of Gracilaria tenuistipitata var. liui (Red alga).